Reading from the N-terminus, the 567-residue chain is Hexose transporter HXT9 (567 aa).

Residues 1–16 (MSGVNNTSANDLSTTE) are compositionally biased toward polar residues. Residues 1–45 (MSGVNNTSANDLSTTESNSNSVANAPSVKTEHNDSKNSLNLDATE) form a disordered region. At 1-56 (MSGVNNTSANDLSTTESNSNSVANAPSVKTEHNDSKNSLNLDATEPPIDLPQKPLS) the chain is on the cytoplasmic side. Residues 17–28 (SNSNSVANAPSV) are compositionally biased toward low complexity. Residues 57 to 77 (AYTTVAILCLMIAFGGFIFGW) form a helical membrane-spanning segment. Residues 78–112 (DTGTISGFVNLSDFIRRFGQKNDKGTYYLSKVRMG) are Extracellular-facing. Asn87 carries N-linked (GlcNAc...) asparagine glycosylation. The helical transmembrane segment at 113–133 (LIVSIFNIGCAIGGIVLSKVG) threads the bilayer. Over 134 to 139 (DIYGRR) the chain is Cytoplasmic. A helical transmembrane segment spans residues 140–160 (IGLITVTAIYVVGILIQITSI). At 161–170 (NKWYQYFIGR) the chain is on the extracellular side. The chain crosses the membrane as a helical span at residues 171-191 (IISGLGVGGIAVLSPMLISEV). Residues 192–197 (APKQIR) lie on the Cytoplasmic side of the membrane. The chain crosses the membrane as a helical span at residues 198–218 (GTLVQLYQLMCTMGIFLGYCT). Residues 219-232 (NYGTKNYHNATQWR) are Extracellular-facing. The N-linked (GlcNAc...) asparagine glycan is linked to Asn227. Residues 233-253 (VGLGLCFAWTTFMVSGMMFVP) traverse the membrane as a helical segment. Residues 254 to 336 (ESPRYLIEVG…IQSLQQLTGD (83 aa)) are Cytoplasmic-facing. The helical transmembrane segment at 337 to 353 (NYFFYYGTTIFKSVGLK) threads the bilayer. Topologically, residues 354–359 (DSFQTS) are extracellular. A helical membrane pass occupies residues 360 to 377 (IIIGVVNFFSSFIAVYTI). Residues 378 to 384 (ERFGRRT) lie on the Cytoplasmic side of the membrane. Residues 385–405 (CLLWGAASMLCCFAVFASVGV) traverse the membrane as a helical segment. Residues 406 to 429 (TKLWPQGSSHQDITSQGAGNCMIV) are Extracellular-facing. The helical transmembrane segment at 430-450 (FTMFFIFSFATTWAGGCYVIV) threads the bilayer. The Cytoplasmic segment spans residues 451 to 467 (SETFPLRVKSRGMAIAT). A helical transmembrane segment spans residues 468–488 (AANWMWGFLISFFTPFITGAI). Position 489 (Asn489) is a topological domain, extracellular. The helical transmembrane segment at 490–510 (FYYGYVFLGCLVFAYFYVFFF) threads the bilayer. The Cytoplasmic segment spans residues 511-567 (VPETKGLTLEEVNTMWLEGVPAWKSASWVPPERRTADYDADAIDHDDRPIYKRFFSS).

It belongs to the major facilitator superfamily. Sugar transporter (TC 2.A.1.1) family.

It localises to the membrane. In terms of biological role, probable glucose transporter. This is Hexose transporter HXT9 (HXT9) from Saccharomyces cerevisiae (strain ATCC 204508 / S288c) (Baker's yeast).